A 245-amino-acid polypeptide reads, in one-letter code: Aliphatic sulfonates import ATP-binding protein SsuB 1 (245 aa).

Residues 9–227 form the ABC transporter domain; sequence LDLVGIGHRY…HRGDAQLAAW (219 aa). ATP is bound at residue 41 to 48; sequence GPSGVGKS.

This sequence belongs to the ABC transporter superfamily. Aliphatic sulfonates importer (TC 3.A.1.17.2) family. The complex is composed of two ATP-binding proteins (SsuB), two transmembrane proteins (SsuC) and a solute-binding protein (SsuA).

The protein localises to the cell membrane. The enzyme catalyses ATP + H2O + aliphatic sulfonate-[sulfonate-binding protein]Side 1 = ADP + phosphate + aliphatic sulfonateSide 2 + [sulfonate-binding protein]Side 1.. Its function is as follows. Part of the ABC transporter complex SsuABC involved in aliphatic sulfonates import. Responsible for energy coupling to the transport system. The chain is Aliphatic sulfonates import ATP-binding protein SsuB 1 from Rhodococcus jostii (strain RHA1).